The sequence spans 245 residues: tRNA (guanine-N(1)-)-methyltransferase (245 aa).

Residues glycine 111 and 130-135 (IGDYVL) each bind S-adenosyl-L-methionine.

Belongs to the RNA methyltransferase TrmD family. Homodimer.

The protein localises to the cytoplasm. The enzyme catalyses guanosine(37) in tRNA + S-adenosyl-L-methionine = N(1)-methylguanosine(37) in tRNA + S-adenosyl-L-homocysteine + H(+). Its function is as follows. Specifically methylates guanosine-37 in various tRNAs. This chain is tRNA (guanine-N(1)-)-methyltransferase, found in Dictyoglomus turgidum (strain DSM 6724 / Z-1310).